The chain runs to 259 residues: Malonyl-[acyl-carrier protein] O-methyltransferase (259 aa).

This sequence belongs to the methyltransferase superfamily.

It carries out the reaction malonyl-[ACP] + S-adenosyl-L-methionine = malonyl-[ACP] methyl ester + S-adenosyl-L-homocysteine. It functions in the pathway cofactor biosynthesis; biotin biosynthesis. Converts the free carboxyl group of a malonyl-thioester to its methyl ester by transfer of a methyl group from S-adenosyl-L-methionine (SAM). It allows to synthesize pimeloyl-ACP via the fatty acid synthetic pathway. This is Malonyl-[acyl-carrier protein] O-methyltransferase from Anoxybacillus flavithermus (strain DSM 21510 / WK1).